The following is a 660-amino-acid chain: Protein translocase subunit SecA 2 (660 aa).

ATP-binding positions include Gln-113, 131–135, and Asp-539; that span reads GEGKT.

This sequence belongs to the SecA family. As to quaternary structure, monomer and homodimer. Part of the essential Sec protein translocation apparatus which comprises SecA, SecYEG and auxiliary proteins SecDF-YajC and YidC.

The protein resides in the cell inner membrane. The protein localises to the cytoplasm. The enzyme catalyses ATP + H2O + cellular proteinSide 1 = ADP + phosphate + cellular proteinSide 2.. In terms of biological role, part of the Sec protein translocase complex. Interacts with the SecYEG preprotein conducting channel. Has a central role in coupling the hydrolysis of ATP to the transfer of proteins into and across the cell membrane, serving both as a receptor for the preprotein-SecB complex and as an ATP-driven molecular motor driving the stepwise translocation of polypeptide chains across the membrane. The protein is Protein translocase subunit SecA 2 of Bordetella avium (strain 197N).